The sequence spans 358 residues: Ion-translocating oxidoreductase complex subunit D (358 aa).

The next 4 helical transmembrane spans lie at 19-39, 41-61, 79-99, and 125-145; these read IMLW…YYFG, GVVL…FIAI, LTAL…IIII, and IGYV…MPPI. At Thr-186 the chain carries FMN phosphoryl threonine. 5 helical membrane passes run 220 to 240, 248 to 268, 271 to 291, 297 to 317, and 321 to 341; these read FAQG…FLIL, IPVA…FTGF, LSAI…FIAT, SITP…VYLI, and GNYP…VPLI.

This sequence belongs to the NqrB/RnfD family. The complex is composed of six subunits: RnfA, RnfB, RnfC, RnfD, RnfE and RnfG. FMN serves as cofactor.

The protein localises to the cell inner membrane. Functionally, part of a membrane-bound complex that couples electron transfer with translocation of ions across the membrane. The sequence is that of Ion-translocating oxidoreductase complex subunit D from Haemophilus influenzae (strain 86-028NP).